We begin with the raw amino-acid sequence, 145 residues long: Meiotically up-regulated gene 124 protein (145 aa).

2 helical membrane passes run 18-38 and 95-115; these read IILT…CPSI and FAWS…NFFL.

The protein localises to the membrane. In terms of biological role, has a role in meiosis. The chain is Meiotically up-regulated gene 124 protein (mug124) from Schizosaccharomyces pombe (strain 972 / ATCC 24843) (Fission yeast).